Reading from the N-terminus, the 734-residue chain is Polyribonucleotide nucleotidyltransferase (734 aa).

Asp-503 and Asp-509 together coordinate Mg(2+). The region spanning 570 to 629 (PKLSTIQVPVDAIGMIIGKGGETIRSITEETGAQINVDDDGTVTISSPNGESAAAAIETI) is the KH domain. In terms of domain architecture, S1 motif spans 639–713 (GTIYMGKVKD…GKIRYALSIK (75 aa)).

Belongs to the polyribonucleotide nucleotidyltransferase family. It depends on Mg(2+) as a cofactor.

It localises to the cytoplasm. The enzyme catalyses RNA(n+1) + phosphate = RNA(n) + a ribonucleoside 5'-diphosphate. Functionally, involved in mRNA degradation. Catalyzes the phosphorolysis of single-stranded polyribonucleotides processively in the 3'- to 5'-direction. The polypeptide is Polyribonucleotide nucleotidyltransferase (Chlorobium phaeobacteroides (strain BS1)).